A 448-amino-acid polypeptide reads, in one-letter code: Glutamyl-tRNA reductase (448 aa).

Substrate contacts are provided by residues 48–51, S100, 105–107, and Q111; these read TCNR and EDQ. The Nucleophile role is filled by C49. 180 to 185 lines the NADP(+) pocket; sequence GAGEIG.

It belongs to the glutamyl-tRNA reductase family. In terms of assembly, homodimer.

The enzyme catalyses (S)-4-amino-5-oxopentanoate + tRNA(Glu) + NADP(+) = L-glutamyl-tRNA(Glu) + NADPH + H(+). It participates in porphyrin-containing compound metabolism; protoporphyrin-IX biosynthesis; 5-aminolevulinate from L-glutamyl-tRNA(Glu): step 1/2. Catalyzes the NADPH-dependent reduction of glutamyl-tRNA(Glu) to glutamate 1-semialdehyde (GSA). The chain is Glutamyl-tRNA reductase from Methanosarcina mazei (strain ATCC BAA-159 / DSM 3647 / Goe1 / Go1 / JCM 11833 / OCM 88) (Methanosarcina frisia).